The following is a 280-amino-acid chain: Putative pyruvate, phosphate dikinase regulatory protein (280 aa).

Gly-158 to Thr-165 contributes to the ADP binding site.

Belongs to the pyruvate, phosphate/water dikinase regulatory protein family. PDRP subfamily.

It carries out the reaction N(tele)-phospho-L-histidyl/L-threonyl-[pyruvate, phosphate dikinase] + ADP = N(tele)-phospho-L-histidyl/O-phospho-L-threonyl-[pyruvate, phosphate dikinase] + AMP + H(+). The catalysed reaction is N(tele)-phospho-L-histidyl/O-phospho-L-threonyl-[pyruvate, phosphate dikinase] + phosphate + H(+) = N(tele)-phospho-L-histidyl/L-threonyl-[pyruvate, phosphate dikinase] + diphosphate. Its function is as follows. Bifunctional serine/threonine kinase and phosphorylase involved in the regulation of the pyruvate, phosphate dikinase (PPDK) by catalyzing its phosphorylation/dephosphorylation. The polypeptide is Putative pyruvate, phosphate dikinase regulatory protein (Lactobacillus gasseri (strain ATCC 33323 / DSM 20243 / BCRC 14619 / CIP 102991 / JCM 1131 / KCTC 3163 / NCIMB 11718 / NCTC 13722 / AM63)).